The chain runs to 589 residues: Transcription factor MYC4 (589 aa).

Residues 99–150 are JAZ-interaction domain; that stretch reads NTVLLGWGDGYYKGEEEKSRKKKSNPASAAEQEHRKRVIRELNSLISGGVGG. Disordered regions lie at residues 114–133, 291–326, 340–359, and 381–422; these read EEKSRKKKSNPASAAEQEHR, AAPVMNNGGNDSTSNSDSQPISKLCNGSSVENPNPK, IENGQEEDSSNKKRSPVSNN, and ASVA…EAER. The segment covering 296–308 has biased composition (low complexity); that stretch reads NNGGNDSTSNSDS. Positions 309 to 322 are enriched in polar residues; the sequence is QPISKLCNGSSVEN. Residues 381–398 are compositionally biased toward basic and acidic residues; sequence ASVAKEAESNRVVVEPEK. Residues 399-408 show a composition bias toward basic residues; sequence KPRKRGRKPA. The span at 409–422 shows a compositional bias: basic and acidic residues; the sequence is NGREEPLNHVEAER. Residues 412-461 form the bHLH domain; sequence EEPLNHVEAERQRREKLNQRFYSLRAVVPNVSKMDKASLLGDAISYISEL.

In terms of assembly, homo- and heterodimer. Interacts with MYB28, MYB29, MYB34, MYB51, MYB76, MYB122, MYC3, AFPH2/NINJA and the JAZ repressors TIFY10A/JAZ1, TIFY10B/JAZ2, TIFY6B/JAZ3, TIFY6A/JAZ4, TIFY11A/JAZ5, TIFY11B/JAZ6, TIFY5B/JAZ7, TIFY5A/JAZ8, TIFY7/JAZ9, TIFY9/JAZ10, TIFY3A/JAZ11 and TIFY3B/JAZ12. As to expression, expressed constitutively at low levels. Preferentially expressed in vascular tissues.

The protein resides in the nucleus. Its function is as follows. Transcription factor involved in jasmonic acid (JA) gene regulation. With MYC2 and MYC3, controls additively subsets of JA-dependent responses. Can form complexes with all known glucosinolate-related MYBs to regulate glucosinolate biosynthesis. Binds to the G-box (5'-CACGTG-3') of promoters. Activates multiple TIFY/JAZ promoters. The chain is Transcription factor MYC4 (MYC4) from Arabidopsis thaliana (Mouse-ear cress).